The sequence spans 529 residues: Cytochrome P450 monooxygenase patI (529 aa).

Residues 1–8 (MDFTQVPP) lie on the Cytoplasmic side of the membrane. The chain crosses the membrane as a helical span at residues 9-25 (SYILGVLLSSTSILFCL). Topologically, residues 26–529 (KYLLRSGYRP…EAQGVFSRFD (504 aa)) are lumenal. Asparagine 81 and asparagine 383 each carry an N-linked (GlcNAc...) asparagine glycan. Heme is bound at residue cysteine 449.

The protein belongs to the cytochrome P450 family. It depends on heme as a cofactor.

It localises to the endoplasmic reticulum membrane. It catalyses the reaction 3-hydroxybenzyl alcohol + reduced [NADPH--hemoprotein reductase] + O2 = gentisyl alcohol + oxidized [NADPH--hemoprotein reductase] + H2O + H(+). Its pathway is mycotoxin biosynthesis; patulin biosynthesis. In terms of biological role, cytochrome P450 monooxygenase; part of the gene cluster that mediates the biosynthesis of patulin, an acetate-derived tetraketide mycotoxin produced by several fungal species that shows antimicrobial properties against several bacteria. PatI catalyzes the conversion of m-hydroxybenzyl alcohol into gentisyl alcohol. The pathway begins with the synthesis of 6-methylsalicylic acid by the polyketide synthase (PKS) patK via condensation of acetate and malonate units. The 6-methylsalicylic acid decarboxylase patG then catalyzes the decarboxylation of 6-methylsalicylic acid to yield m-cresol (also known as 3-methylphenol). These first reactions occur in the cytosol. The intermediate m-cresol is then transported into the endoplasmic reticulum where the cytochrome P450 monooxygenase patH converts it to m-hydroxybenzyl alcohol, which is further converted to gentisyl alcohol by the cytochrome P450 monooxygenase patI. The oxidoreductases patJ and patO further convert gentisyl alcohol to isoepoxydon in the vacuole. PatN catalyzes then the transformation of isoepoxydon into phyllostine. The cluster protein patF is responsible for the conversion from phyllostine to neopatulin whereas the alcohol dehydrogenase patD converts neopatulin to E-ascladiol. The steps between isoepoxydon and E-ascladiol occur in the cytosol, and E-ascladiol is probably secreted to the extracellular space by one of the cluster-specific transporters patC or patM. Finally, the secreted patulin synthase patE catalyzes the conversion of E-ascladiol to patulin. This chain is Cytochrome P450 monooxygenase patI, found in Aspergillus clavatus (strain ATCC 1007 / CBS 513.65 / DSM 816 / NCTC 3887 / NRRL 1 / QM 1276 / 107).